A 146-amino-acid chain; its full sequence is Deoxyuridine 5'-triphosphate nucleotidohydrolase (146 aa).

Substrate is bound by residues 66-68 (RSG), asparagine 79, 83-85 (TVD), and lysine 93.

It belongs to the dUTPase family. The cofactor is Mg(2+).

It catalyses the reaction dUTP + H2O = dUMP + diphosphate + H(+). It participates in pyrimidine metabolism; dUMP biosynthesis; dUMP from dCTP (dUTP route): step 2/2. In terms of biological role, this enzyme is involved in nucleotide metabolism: it produces dUMP, the immediate precursor of thymidine nucleotides and it decreases the intracellular concentration of dUTP so that uracil cannot be incorporated into DNA. The polypeptide is Deoxyuridine 5'-triphosphate nucleotidohydrolase (Fusobacterium nucleatum subsp. nucleatum (strain ATCC 25586 / DSM 15643 / BCRC 10681 / CIP 101130 / JCM 8532 / KCTC 2640 / LMG 13131 / VPI 4355)).